Consider the following 246-residue polypeptide: Probable transcriptional regulatory protein HAPS_0943 (246 aa).

The protein belongs to the TACO1 family.

It is found in the cytoplasm. The protein is Probable transcriptional regulatory protein HAPS_0943 of Glaesserella parasuis serovar 5 (strain SH0165) (Haemophilus parasuis).